Here is a 145-residue protein sequence, read N- to C-terminus: Basic phospholipase A2 PC14 (145 aa).

The N-terminal stretch at 1–21 (MYPAHLLLLLAVCVSLLGASA) is a signal peptide. The propeptide occupies 22 to 27 (IPPLPL). 7 disulfides stabilise this stretch: Cys38–Cys98, Cys54–Cys144, Cys56–Cys72, Cys71–Cys125, Cys78–Cys118, Cys87–Cys111, and Cys105–Cys116. Ca(2+)-binding residues include Tyr55, Gly57, and Gly59. The active site involves His75. Asp76 contributes to the Ca(2+) binding site. Asp119 is a catalytic residue.

It belongs to the phospholipase A2 family. Group I subfamily. D49 sub-subfamily. Requires Ca(2+) as cofactor.

It is found in the secreted. It carries out the reaction a 1,2-diacyl-sn-glycero-3-phosphocholine + H2O = a 1-acyl-sn-glycero-3-phosphocholine + a fatty acid + H(+). Its function is as follows. PLA2 catalyzes the calcium-dependent hydrolysis of the 2-acyl groups in 3-sn-phosphoglycerides. The chain is Basic phospholipase A2 PC14 from Laticauda laticaudata (Blue-ringed sea krait).